The chain runs to 384 residues: MDEFKVTPWDVEGLVDYNKLIEEFGTSPLTDELLEKTAQLTKSELPLYFRRRFFFSHRDYDKVLQDYESGKGFFLYTGRGPSGPMHIGHIIPFFATKWLQEKFGVNLYIQITDDEKFLFKDKLTFEDTKYWAYQNILDIIAVGFDPDRTFIFQDSEFTKIYEMAIPIAKKINFSMAKAVFGFTEQSKIGMIFYPAIQAAPTFFEKKRCLIPAAIDQDPYWRLQRDFAESLGYYKTAAIHSKFVPGLMGLEGKMSASKPETAIYLTDDPEEVGRKIWKYALTGGRATAKEQREKGGEPEKCVVFKWLEIFFEEDDKKLMERYHACKNGELLCGQCKRYLIKKVQEFLKEHQKKRKEAEKKVEKFKYTGELAREQWDKAVPEALKG.

Positions 81 to 89 (PSGPMHIGH) match the 'HIGH' region motif. Positions 252-256 (KMSAS) match the 'KMSKS' region motif.

It belongs to the class-I aminoacyl-tRNA synthetase family.

The protein resides in the cytoplasm. It catalyses the reaction tRNA(Trp) + L-tryptophan + ATP = L-tryptophyl-tRNA(Trp) + AMP + diphosphate + H(+). This Thermococcus onnurineus (strain NA1) protein is Tryptophan--tRNA ligase.